The chain runs to 460 residues: Dynactin subunit 4 (460 aa).

Alanine 2 is subject to N-acetylalanine. Residues 152–172 are a coiled coil; it reads QQLAQKEKVERDRKKLARRRN. Serine 196 carries the post-translational modification Phosphoserine. A Glycyl lysine isopeptide (Lys-Gly) (interchain with G-Cter in SUMO2) cross-link involves residue lysine 215. The residue at position 407 (threonine 407) is a Phosphothreonine.

It belongs to the dynactin subunit 4 family. Subunit of dynactin, a multiprotein complex part of a tripartite complex with dynein and a adapter, such as BICDL1, BICD2 or HOOK3. The dynactin complex is built around ACTR1A/ACTB filament and consists of an actin-related filament composed of a shoulder domain, a pointed end and a barbed end. Its length is defined by its flexible shoulder domain. The soulder is composed of 2 DCTN1 subunits, 4 DCTN2 and 2 DCTN3. The 4 DCNT2 (via N-terminus) bind the ACTR1A filament and act as molecular rulers to determine the length. The pointed end is important for binding dynein-dynactin cargo adapters. Consists of 4 subunits: ACTR10, DCNT4, DCTN5 and DCTN6. The barbed end is composed of a CAPZA1:CAPZB heterodimers, which binds ACTR1A/ACTB filament and dynactin and stabilizes dynactin. Interacts with ATP7B, but not ATP7A, in a copper-dependent manner. Interacts with ANK2; this interaction is required for localization at costameres. Interacts with N4BP2L1.

It is found in the cytoplasm. The protein resides in the cytoskeleton. Its subcellular location is the microtubule organizing center. The protein localises to the centrosome. It localises to the stress fiber. It is found in the cell cortex. The protein resides in the myofibril. Its subcellular location is the sarcomere. Functionally, part of the dynactin complex that activates the molecular motor dynein for ultra-processive transport along microtubules. The chain is Dynactin subunit 4 from Homo sapiens (Human).